The sequence spans 90 residues: N(2)-fixation sustaining protein CowN (90 aa).

It belongs to the CowN family.

Its function is as follows. Is required to sustain N(2)-dependent growth in the presence of low levels of carbon monoxide (CO). Probably acts by protecting the N(2) fixation ability of the nitrogenase complex, which is inactivated in the presence of CO. The protein is N(2)-fixation sustaining protein CowN of Methylocella silvestris (strain DSM 15510 / CIP 108128 / LMG 27833 / NCIMB 13906 / BL2).